Consider the following 182-residue polypeptide: ATP synthase subunit b, chloroplastic (182 aa).

A helical transmembrane segment spans residues 33–51 (VLNIAILLSGVIYLGRNFL).

It belongs to the ATPase B chain family. As to quaternary structure, F-type ATPases have 2 components, F(1) - the catalytic core - and F(0) - the membrane proton channel. F(1) has five subunits: alpha(3), beta(3), gamma(1), delta(1), epsilon(1). F(0) has four main subunits: a(1), b(1), b'(1) and c(10-14). The alpha and beta chains form an alternating ring which encloses part of the gamma chain. F(1) is attached to F(0) by a central stalk formed by the gamma and epsilon chains, while a peripheral stalk is formed by the delta, b and b' chains.

The protein resides in the plastid. It localises to the chloroplast thylakoid membrane. Functionally, f(1)F(0) ATP synthase produces ATP from ADP in the presence of a proton or sodium gradient. F-type ATPases consist of two structural domains, F(1) containing the extramembraneous catalytic core and F(0) containing the membrane proton channel, linked together by a central stalk and a peripheral stalk. During catalysis, ATP synthesis in the catalytic domain of F(1) is coupled via a rotary mechanism of the central stalk subunits to proton translocation. Its function is as follows. Component of the F(0) channel, it forms part of the peripheral stalk, linking F(1) to F(0). In Guillardia theta (Cryptophyte), this protein is ATP synthase subunit b, chloroplastic.